The sequence spans 468 residues: Ribulose bisphosphate carboxylase large chain (468 aa).

Position 5 is an N6,N6,N6-trimethyllysine (K5). Substrate contacts are provided by N114 and T164. Catalysis depends on K166, which acts as the Proton acceptor. K168 contributes to the substrate binding site. Residues K192, D194, and E195 each coordinate Mg(2+). An N6-carboxylysine modification is found at K192. The active-site Proton acceptor is H285. 3 residues coordinate substrate: R286, H318, and S370.

The protein belongs to the RuBisCO large chain family. Type I subfamily. As to quaternary structure, heterohexadecamer of 8 large chains and 8 small chains; disulfide-linked. The disulfide link is formed within the large subunit homodimers. Mg(2+) is required as a cofactor. In terms of processing, the disulfide bond which can form in the large chain dimeric partners within the hexadecamer appears to be associated with oxidative stress and protein turnover.

Its subcellular location is the plastid. It localises to the chloroplast. The enzyme catalyses 2 (2R)-3-phosphoglycerate + 2 H(+) = D-ribulose 1,5-bisphosphate + CO2 + H2O. It carries out the reaction D-ribulose 1,5-bisphosphate + O2 = 2-phosphoglycolate + (2R)-3-phosphoglycerate + 2 H(+). Its function is as follows. RuBisCO catalyzes two reactions: the carboxylation of D-ribulose 1,5-bisphosphate, the primary event in carbon dioxide fixation, as well as the oxidative fragmentation of the pentose substrate in the photorespiration process. Both reactions occur simultaneously and in competition at the same active site. The protein is Ribulose bisphosphate carboxylase large chain of Anthocercis viscosa (Sticky tailflower).